The sequence spans 288 residues: Polyamine aminopropyltransferase (288 aa).

The 230-residue stretch at 9-238 folds into the PABS domain; that stretch reads ETLHDQFGQY…GIMTFAWATD (230 aa). Gln-33 is a binding site for S-methyl-5'-thioadenosine. The spermidine site is built by His-64 and Asp-88. Residues Glu-108 and 140–141 contribute to the S-methyl-5'-thioadenosine site; that span reads DG. Asp-158 functions as the Proton acceptor in the catalytic mechanism. 158 to 161 contributes to the spermidine binding site; that stretch reads DCTD. Residue Pro-165 coordinates S-methyl-5'-thioadenosine.

The protein belongs to the spermidine/spermine synthase family. As to quaternary structure, homodimer or homotetramer.

Its subcellular location is the cytoplasm. The catalysed reaction is S-adenosyl 3-(methylsulfanyl)propylamine + putrescine = S-methyl-5'-thioadenosine + spermidine + H(+). It functions in the pathway amine and polyamine biosynthesis; spermidine biosynthesis; spermidine from putrescine: step 1/1. Its function is as follows. Catalyzes the irreversible transfer of a propylamine group from the amino donor S-adenosylmethioninamine (decarboxy-AdoMet) to putrescine (1,4-diaminobutane) to yield spermidine. In Escherichia fergusonii (strain ATCC 35469 / DSM 13698 / CCUG 18766 / IAM 14443 / JCM 21226 / LMG 7866 / NBRC 102419 / NCTC 12128 / CDC 0568-73), this protein is Polyamine aminopropyltransferase.